The following is a 139-amino-acid chain: Phosphoribosyl-AMP cyclohydrolase (139 aa).

Residue D92 coordinates Mg(2+). C93 is a binding site for Zn(2+). Residues D94 and D96 each coordinate Mg(2+). Residues C111 and C118 each coordinate Zn(2+).

Belongs to the PRA-CH family. In terms of assembly, homodimer. The cofactor is Mg(2+). Zn(2+) serves as cofactor.

The protein localises to the cytoplasm. The catalysed reaction is 1-(5-phospho-beta-D-ribosyl)-5'-AMP + H2O = 1-(5-phospho-beta-D-ribosyl)-5-[(5-phospho-beta-D-ribosylamino)methylideneamino]imidazole-4-carboxamide. It functions in the pathway amino-acid biosynthesis; L-histidine biosynthesis; L-histidine from 5-phospho-alpha-D-ribose 1-diphosphate: step 3/9. In terms of biological role, catalyzes the hydrolysis of the adenine ring of phosphoribosyl-AMP. The polypeptide is Phosphoribosyl-AMP cyclohydrolase (Caulobacter vibrioides (strain ATCC 19089 / CIP 103742 / CB 15) (Caulobacter crescentus)).